The chain runs to 174 residues: 3-hydroxydecanoyl-[acyl-carrier-protein] dehydratase (174 aa).

His71 is an active-site residue.

The protein belongs to the thioester dehydratase family. FabA subfamily. In terms of assembly, homodimer.

It localises to the cytoplasm. The catalysed reaction is a (3R)-hydroxyacyl-[ACP] = a (2E)-enoyl-[ACP] + H2O. It carries out the reaction (3R)-hydroxydecanoyl-[ACP] = (2E)-decenoyl-[ACP] + H2O. It catalyses the reaction (2E)-decenoyl-[ACP] = (3Z)-decenoyl-[ACP]. It functions in the pathway lipid metabolism; fatty acid biosynthesis. Functionally, necessary for the introduction of cis unsaturation into fatty acids. Catalyzes the dehydration of (3R)-3-hydroxydecanoyl-ACP to E-(2)-decenoyl-ACP and then its isomerization to Z-(3)-decenoyl-ACP. Can catalyze the dehydratase reaction for beta-hydroxyacyl-ACPs with saturated chain lengths up to 16:0, being most active on intermediate chain length. The chain is 3-hydroxydecanoyl-[acyl-carrier-protein] dehydratase from Nitrobacter winogradskyi (strain ATCC 25391 / DSM 10237 / CIP 104748 / NCIMB 11846 / Nb-255).